The sequence spans 93 residues: Small ribosomal subunit protein uS19 (93 aa).

The protein belongs to the universal ribosomal protein uS19 family.

Its function is as follows. Protein S19 forms a complex with S13 that binds strongly to the 16S ribosomal RNA. The sequence is that of Small ribosomal subunit protein uS19 from Clavibacter michiganensis subsp. michiganensis (strain NCPPB 382).